The sequence spans 730 residues: MPKNSKVVKRELDDDVTESVKDLLSNEDSADDAFKTSELIVDGQEEKDTDVEEGSEVEDERPAWSSKLQYILAQVGFSVGLGNVWRFPYLCQKNGGGAYLLPYLILLMVIGIPLFFLELSVGQRIRRGSIGVWNYISPKLGGIGFASCVVCYFVALYYNVIIGWSLFYFSQSFQQPLPWDQCPLVKNASHTFVEPECEQSSATTYYWYREALNISSSISESGGLNWKMTICLLAAWVMVCLAMIKGIQSSGKIIYFSSLFPYVVLICFLIRALLLNGSIDGIRHMFTPKLEIMLEPKVWREAATQVFFALGLGFGGVIAFSSYNKRDNNCHFDAVLVSFINFFTSVLATLVVFAVLGFKANVINEKCITQNSQTIMKFLKMGNISQDIIPHHINLSAVTAEDYHLVYDIIQKVKEEEFPALHLNSCKIEEELNKAVQGTGLAFIAFTEAMTHFPASPFWSVMFFLMLVNLGLGSMFGTIEGIVTPIVDTFKVRKEILTVICCLLAFCIGLIFVQRSGNYFVTMFDDYSATLPLLIVVILENIAVCFVYGIDKFMEDLKDMLGFAPSRYYYYMWKYVSPLMLLSLLIASVVNMGLSPPGYNAWIEDKASEEFLSYPTWGLVVCVSLVVFAVLPVPVVFIVRRFNLIDDSSGNLASVTYKRGRVLNEPVNLEGDDTSLIHGKISSEMPSPNFGKNIYRKQSGSPTLDTAPNGRYGIGYLMADIMPDMPESDL.

The tract at residues 1–24 is disordered; the sequence is MPKNSKVVKRELDDDVTESVKDLL. Residues 1 to 70 lie on the Extracellular side of the membrane; that stretch reads MPKNSKVVKR…RPAWSSKLQY (70 aa). A phosphoserine mark is found at serine 25 and serine 55. The next 3 membrane-spanning stretches (helical) occupy residues 71–91, 97–117, and 149–169; these read ILAQ…PYLC, GAYL…LFFL, and VVCY…LFYF. Residues 170–223 lie on the Cytoplasmic side of the membrane; sequence SQSFQQPLPWDQCPLVKNASHTFVEPECEQSSATTYYWYREALNISSSISESGG. The next 2 membrane-spanning stretches (helical) occupy residues 224 to 244 and 253 to 273; these read LNWK…LAMI and IIYF…IRAL. N-linked (GlcNAc...) asparagine glycosylation is present at asparagine 276. The next 2 helical transmembrane spans lie at 302–322 and 335–355; these read AATQ…AFSS and VLVS…VFAV. At 356-458 the chain is on the cytoplasmic side; the sequence is LGFKANVINE…AMTHFPASPF (103 aa). The next 5 helical transmembrane spans lie at 459 to 479, 494 to 514, 530 to 550, 575 to 595, and 619 to 639; these read WSVM…FGTI, KEIL…IFVQ, TLPL…VYGI, YVSP…MGLS, and LVVC…VFIV. Topologically, residues 640 to 730 are extracellular; it reads RRFNLIDDSS…IMPDMPESDL (91 aa). Serine 687, serine 699, and serine 701 each carry phosphoserine.

The protein belongs to the sodium:neurotransmitter symporter (SNF) (TC 2.A.22) family. SLC6A15 subfamily.

The protein localises to the membrane. It catalyses the reaction L-leucine(in) + Na(+)(in) = L-leucine(out) + Na(+)(out). It carries out the reaction L-isoleucine(in) + Na(+)(in) = L-isoleucine(out) + Na(+)(out). The catalysed reaction is L-methionine(in) + Na(+)(in) = L-methionine(out) + Na(+)(out). The enzyme catalyses L-proline(in) + Na(+)(in) = L-proline(out) + Na(+)(out). It catalyses the reaction L-alanine(in) + Na(+)(in) = L-alanine(out) + Na(+)(out). It carries out the reaction L-asparagine(in) + Na(+)(in) = L-asparagine(out) + Na(+)(out). The catalysed reaction is L-valine(in) + Na(+)(in) = L-valine(out) + Na(+)(out). The enzyme catalyses L-cysteine(in) + Na(+)(in) = L-cysteine(out) + Na(+)(out). It catalyses the reaction L-glutamine(in) + Na(+)(in) = L-glutamine(out) + Na(+)(out). It carries out the reaction L-serine(in) + Na(+)(in) = L-serine(out) + Na(+)(out). The catalysed reaction is L-threonine(in) + Na(+)(in) = L-threonine(out) + Na(+)(out). The enzyme catalyses L-pipecolate(in) + Na(+)(in) = L-pipecolate(out) + Na(+)(out). It catalyses the reaction L-phenylalanine(in) + Na(+)(in) = L-phenylalanine(out) + Na(+)(out). Functionally, functions as a sodium-dependent neutral amino acid transporter. Exhibits preference for the branched-chain amino acids, particularly leucine, valine and isoleucine and methionine. Can also transport low-affinity substrates such as alanine, phenylalanine, glutamine and pipecolic acid. Mediates the saturable, pH-sensitive and electrogenic cotransport of proline and sodium ions with a stoichiometry of 1:1. May have a role as transporter for neurotransmitter precursors into neurons. In contrast to other members of the neurotransmitter transporter family, does not appear to be chloride-dependent. The sequence is that of Sodium-dependent neutral amino acid transporter B(0)AT2 (SLC6A15) from Pongo abelii (Sumatran orangutan).